Here is a 36-residue protein sequence, read N- to C-terminus: uncharacterized protein (36 aa).

This is an uncharacterized protein from Saccharomyces cerevisiae (strain ATCC 204508 / S288c) (Baker's yeast).